A 334-amino-acid polypeptide reads, in one-letter code: Beta-hexosaminidase (334 aa).

Substrate is bound by residues Asp-62, Arg-70, Arg-131, and 161–162; that span reads KH. His-174 serves as the catalytic Proton donor/acceptor. Asp-246 serves as the catalytic Nucleophile.

It belongs to the glycosyl hydrolase 3 family. NagZ subfamily.

It is found in the cytoplasm. The enzyme catalyses Hydrolysis of terminal non-reducing N-acetyl-D-hexosamine residues in N-acetyl-beta-D-hexosaminides.. Its pathway is cell wall biogenesis; peptidoglycan recycling. Functionally, plays a role in peptidoglycan recycling by cleaving the terminal beta-1,4-linked N-acetylglucosamine (GlcNAc) from peptide-linked peptidoglycan fragments, giving rise to free GlcNAc, anhydro-N-acetylmuramic acid and anhydro-N-acetylmuramic acid-linked peptides. This chain is Beta-hexosaminidase, found in Tolumonas auensis (strain DSM 9187 / NBRC 110442 / TA 4).